A 287-amino-acid chain; its full sequence is Ethanolamine ammonia-lyase small subunit (287 aa).

Val168, Glu189, and Cys218 together coordinate adenosylcob(III)alamin.

Belongs to the EutC family. As to quaternary structure, the basic unit is a heterodimer which dimerizes to form tetramers. The heterotetramers trimerize; 6 large subunits form a core ring with 6 small subunits projecting outwards. It depends on adenosylcob(III)alamin as a cofactor.

The protein resides in the bacterial microcompartment. It catalyses the reaction ethanolamine = acetaldehyde + NH4(+). It participates in amine and polyamine degradation; ethanolamine degradation. Catalyzes the deamination of various vicinal amino-alcohols to oxo compounds. Allows this organism to utilize ethanolamine as the sole source of nitrogen and carbon in the presence of external vitamin B12. In Pseudomonas syringae pv. tomato (strain ATCC BAA-871 / DC3000), this protein is Ethanolamine ammonia-lyase small subunit.